A 399-amino-acid polypeptide reads, in one-letter code: CLOCK-interacting pacemaker (399 aa).

The segment covering 1 to 12 (MERKNSSRESPR) has biased composition (basic and acidic residues). Disordered regions lie at residues 1–85 (MERK…AKNA) and 159–224 (SYTK…KLAE). A Phosphoserine modification is found at S213. A coiled-coil region spans residues 333–359 (TLKTKELIRQNQATQVELDQLKEQTQL). The span at 378–388 (SLTPGSSNTGS) shows a compositional bias: polar residues. The segment at 378-399 (SLTPGSSNTGSDLEAFSDHPDI) is disordered.

In terms of assembly, interacts with CLOCK. Forms a ternary complex with the CLOCK-BMAL1 heterodimer. Interacts with CAD and HSPA5.

It is found in the nucleus. The protein resides in the cytoplasm. Its subcellular location is the cytosol. In terms of biological role, transcriptional repressor which may act as a negative-feedback regulator of CLOCK-BMAL1 transcriptional activity in the circadian-clock mechanism. May stimulate BMAL1-dependent phosphorylation of CLOCK. However, the physiological relevance of these observations is unsure, since experiments in knockout mice showed that CIPC is not critially required for basic circadian clock. The chain is CLOCK-interacting pacemaker (CIPC) from Pongo abelii (Sumatran orangutan).